The primary structure comprises 2640 residues: MKLRLIAFVLILWTETLADQSPGPGPEYADVVFLVDSSNYLGIKSFPFVRTFLNRMISSLPIEANKYRVALAQYSDALHNEFQLGTFKNRNPMLNHLKKNFGFIGGSLKIGNALQEAHRTYFSAPTNGRDKKQFPPILVVLASAESEDDVEEAAKALREDGVKIISVGVQKASEENLKAMATSQFHFNLRTARDLGMFAPNMTRIIKDVTQYREGTTVDLITAVAPTTPAAPATPAAPTIPAALTTAANHVDKTVPFPTSCQKDSLADLIFLVDESVGTTQNLRDLQNFLENVTSSVDVKDNCMRLGLMSFSDRAQTISSLRSSANQSEFQQQIQKLSLQTGASNVGAAIEQMRKEGFSESSGSRKAQGVPQIAVLVTHRASDDMVREAALDLRLEGVTMFAMGIEGANNTQLEDIVSYPSRQSISTHSSYSHLESYSGNFLKKIRNEIWTQVSTRAEQMELDKTGCVDTKEADIYFLIDGSSSIRKKEFEQIQIFMSSVIDMFPIGPNKVRVGVVQYSHKNEVEFPVSRYTDGIDLKKAVFNIKQLKGLTFTGKALDFILPLIKKGKTERTDRAPCYLIVLTDGKSNDSVLEPANRLRAEQITIHAIGIGEANKTQLRQIAGKDERVNFGQNFDSLKSIKNEIVHRICSEKGCEDMKADIMFLVDSSGSIGPTNFETMKTFMKNLVGKIQIGADRSQVGVVQFSDYNREEFQLNKYSTHEEIYAAIDRMSPINRNTLTGGALTFVNEYFDLSKGGRPQVRKFLILLTDGKAQDEVGGPATALRSKSVTIFSVGVYGANRAQLEEISGDGSLVFHVENFDHLKAIESKLIFRVCALHDCKRIELLDIVFVLDHSGSIGPREQESMMNLTIHLVKKADVGRDRVQIGALTYSNHPEILFYLNTYSSGSAIAEHLRRPRDTGGETYTAKALQHSNVLFTEEHGSRLTQNVRQLMIVITDGVSHDRDKLDEAARELRDKGITIFAVGVGNANQDELETMAGKKENTVHVDNFDKLRDIYLPLQETLCNNSQETCNLPEADVIFLCDGSDMVSDSEFVTMTTFLSDLIDNFDIESQRMKIGMAQYGSRYQEIIELESSLNKTQWKSQVHSVAQSKGLPRLDFALKHVSDMFDPSVGGRRNAGVPQTLVVITSSSPRYDVTDAVKVLKDLGICVLALGIGDVYKEQLLPITGNSEKIITFRDFNKLKNVDVKKRMVREICQSCGKANCFVDVVVGFDISTHRQGQPLFQGHPRLESYLPGILEDITSIRGVSCGAGAEAQVSLAFKVNSDQEFPAKFQIYQKAAFDSLLHVTVRGPTHLDAPFLQSLWDMFEERSASRGQVLLIFSDGLQGESITLLERQSDRLREAGLDALLVVSLNTFGHDEFSSFEFGKGFDYRTQLTIGMLDLGKTLSQYLGNIAERACCCTFCKCPGIPGPHGTRGLQASKGSSGPKGSRGHRGEDGDPGRRGEIGLQGDRGVVGCPGTRGQKGVKGFSGAQGEHGEDGLDGLDGEEGFYGFRGGKGQKGDPGNQGYPGIRGAAGEDGEKGFPGDPGDPGKDSNIKGQKGEKGERGRQGITGQKGTHGRPSSKGSRGMEGQRGPQGPSGQAGNPGPQGTQGPEGLQGSQGSSGNRGGKGDKGSQGYQGPQGSPGPAGPRGDIGRPGFGGRKGEPGVPGGPGPVGPPGQRGKQGDYGIPGYGQTGRKGVKGPTGFPGDPGQKGDAGNPGIPGGPGPKGFKGLTLSQGLKGRSGLQGSQGPPGRRGPKGTAGQPIYSPCELIQFLRDHSLIFTDKCPVYPTELVFALDQSSGITERRFNETRDTITSIVSDLNIRENNCPVGARVAVVSYDSDTSYLIRGSDYHNKKHLLQLLSQIKYQVPRKARDIGNAMRFVARNVFKRMSAGTNTRRVAVFFSNGQAASRASILTATMELSALDISLAVFAYNERVFLDEAFGFDDTGTFQVIPVPPVGDYEPLEKLRRCTLCYDKCFPNTCAEEPFFPENSYMDVAFLLDNSKNIASDDFQAVKALVSSVIDSFHITSNPSASESGDRVALLSYSPSESSRRKGRVKTEFAFTTYDNQSIMKNYIYTSLQQLNGDATIGLALQWAMEGLFLGTPNPRKHKVIIVISAGENHEEKEFVKTVALRAKCQGYVVFVISLGSTQRDEMEELASYPLDHHLIQLGRMYKPDLNYIVKFLKPFIYSVRRGFNQYPPPTLKDDCRLVELERGDTLPHGLRLTAKLREVPESTISLADQELNAGKDSSFVLEDHRGDHLVYVPSQMLEPHKLVSHYGNDRESVAMASLTSEHESHGREELGLAHEPGDASLQEYYMDVAFLIDASQRVGGRNEFKEVRTLITSVLDYFHIAPAPLTSVLGDRVAVLTYSPPGYLPNTEECPVYLEFDLVTYNTVHQMKHHLQESLQQLNGDVFIGHALQWTVDNVFVGTPNLRKNKVIFIVTAGETNPLDKEVLRNASLRAKCQGYSIFVFSFGPIHNDMELEELASHPLDHHLVRLGRVHRPDLDYVIKFIKPFVHSIRRAINKYPGRDLQAKCDNLTFPGPENAGTEDSALLIPEVYRIEAGENELSGDSGSQEQHFFLLGNSHGNHSESTADLMRQLYLLLSSGELMVNDKEEPCSAETPAPVNSKQDGEDAR.

The N-terminal stretch at 1-18 (MKLRLIAFVLILWTETLA) is a signal peptide. The segment at 19–1426 (DQSPGPGPEY…ACCCTFCKCP (1408 aa)) is nonhelical region. VWFA domains lie at 30 to 209 (DVVF…IKDV), 268 to 445 (DLIF…LKKI), 474 to 644 (DIYF…KNEI), 660 to 829 (DIMF…ESKL), 846 to 1023 (DIVF…QETL), 1037 to 1214 (DVIF…VREI), and 1226 to 1413 (DVVV…LGNI). N-linked (GlcNAc...) asparagine glycans are attached at residues Asn201, Asn292, and Asn614. 5 Collagen-like domains span residues 1426–1478 (PGIP…GCPG), 1474–1524 (VGCP…DPGN), 1557–1614 (GQKG…GPEG), 1632–1689 (GSQG…GIPG), and 1706–1762 (GDPG…AGQP). Residues 1427 to 1760 (GIPGPHGTRG…GRRGPKGTAG (334 aa)) are triple-helical region. The segment at 1435 to 1761 (RGLQASKGSS…RRGPKGTAGQ (327 aa)) is disordered. Residues 1452 to 1464 (HRGEDGDPGRRGE) are compositionally biased toward basic and acidic residues. The segment covering 1537 to 1567 (DGEKGFPGDPGDPGKDSNIKGQKGEKGERGR) has biased composition (basic and acidic residues). The span at 1597–1609 (PSGQAGNPGPQGT) shows a compositional bias: polar residues. Residues 1610-1622 (QGPEGLQGSQGSS) are compositionally biased toward low complexity. Positions 1649-1651 (RGD) match the Cell attachment site motif. Residues 1718–1727 (GIPGGPGPKG) are compositionally biased toward gly residues. Residues 1740–1750 (RSGLQGSQGPP) are compositionally biased toward low complexity. The nonhelical region stretch occupies residues 1761-2640 (QPIYSPCELI…NSKQDGEDAR (880 aa)). 2 VWFA domains span residues 1790 to 1970 (ELVF…KLRR) and 1996 to 2186 (DVAF…VKFL). 2 short sequence motifs (cell attachment site) span residues 2216–2218 (RGD) and 2259–2261 (RGD). Residues 2321-2516 (DVAFLIDASQ…PDLDYVIKFI (196 aa)) form the VWFA 10 domain. Asn2541 is a glycosylation site (N-linked (GlcNAc...) asparagine). The tract at residues 2617–2640 (DKEEPCSAETPAPVNSKQDGEDAR) is disordered.

This sequence belongs to the type VI collagen family. In terms of assembly, trimers composed of three different chains: alpha-1(VI), alpha-2(VI), and alpha-3(VI) or alpha-4(VI) or alpha-5(VI) or alpha-6(VI). Post-translationally, prolines at the third position of the tripeptide repeating unit (G-X-Y) are hydroxylated in some or all of the chains. As to expression, in newborn, it is expressed in lung, heart, kidney, muscle, brain, intestine, skin, femur, sternum and calvaria. In adult, it is widely expressed and is detected in lung, heart, kidney, spleen, muscle, ovary, uterus, brain, skin, liver and sternum.

Its subcellular location is the secreted. The protein resides in the extracellular space. It is found in the extracellular matrix. Functionally, collagen VI acts as a cell-binding protein. This Mus musculus (Mouse) protein is Collagen alpha-5(VI) chain (Col6a5).